The following is a 370-amino-acid chain: ATP/GTP phosphatase (370 aa).

It catalyses the reaction ATP + H2O = ADP + phosphate + H(+). It carries out the reaction GTP + H2O = GDP + phosphate + H(+). In terms of biological role, has nucleotide phosphatase activity toward ATP and GTP, but not toward CTP, TTP and ADP. The polypeptide is ATP/GTP phosphatase (Helicobacter pylori (strain ATCC 700392 / 26695) (Campylobacter pylori)).